The primary structure comprises 401 residues: Adenylosuccinate synthetase (401 aa).

Residues 11 to 17 (GDEGKGK) and 39 to 41 (GHT) each bind GTP. The active-site Proton acceptor is D12. D12 and G39 together coordinate Mg(2+). IMP is bound by residues 12 to 15 (DEGK), 37 to 40 (NAGH), T127, R141, Q212, T227, and R290. The Proton donor role is filled by H40. 286 to 292 (ATTGRPR) serves as a coordination point for substrate. GTP-binding positions include R292, 318 to 320 (KGD), and 390 to 392 (SVG).

Belongs to the adenylosuccinate synthetase family. As to quaternary structure, homodimer. It depends on Mg(2+) as a cofactor.

Its subcellular location is the cytoplasm. It carries out the reaction IMP + L-aspartate + GTP = N(6)-(1,2-dicarboxyethyl)-AMP + GDP + phosphate + 2 H(+). It functions in the pathway purine metabolism; AMP biosynthesis via de novo pathway; AMP from IMP: step 1/2. Functionally, plays an important role in the de novo pathway of purine nucleotide biosynthesis. Catalyzes the first committed step in the biosynthesis of AMP from IMP. This Thermosipho africanus (strain TCF52B) protein is Adenylosuccinate synthetase.